A 449-amino-acid polypeptide reads, in one-letter code: MKSIVAIVGRPNVGKSTLFNRIVGERRAIVDDMPGVTRDRNYAVVERYDKPFILVDTGGFEPVTEDRMLQQMREQSLLAMEEADVILFLMDAKQGLTPADNEVASMLRRVDKPVFYVVNKVDGEKVENEAAEFYALGIDNMHTISAAHNRGIRDLLDEIMALLPDEPLPGEDEVTNIAVVGRPNVGKSSLVNRLLGFERVVANPVAGTTRDSVDTFFTCNKKRYCLIDTAGIRRKGKTSQKLEKYSVVDALKSIERADVALIVLNAEDGITEQDKHIAGYVYEAGRACVFVVNKWDTLEKDNKTIGKFVEQIQYEFKFLAFAPIVFVSARTGQRIHKVMEEAAEVAEQYSRRVTTSELNRVFKEAVEAHHAPLHHARRVKFYFATQVGVKPPTFAIFTNQPDGVLTPYQRYLGNRFRDAFGFKGTPFRLLFRGRERKTADGRERKLSKQ.

2 EngA-type G domains span residues 3–167 and 175–350; these read SIVA…PDEP and TNIA…EQYS. Residues 9-16, 56-60, 119-122, 181-188, 228-232, and 293-296 each bind GTP; these read GRPNVGKS, DTGGF, NKVD, DTAGI, and NKWD. The region spanning 351–435 is the KH-like domain; the sequence is RRVTTSELNR…PFRLLFRGRE (85 aa).

Belongs to the TRAFAC class TrmE-Era-EngA-EngB-Septin-like GTPase superfamily. EngA (Der) GTPase family. As to quaternary structure, associates with the 50S ribosomal subunit.

GTPase that plays an essential role in the late steps of ribosome biogenesis. This chain is GTPase Der, found in Trichlorobacter lovleyi (strain ATCC BAA-1151 / DSM 17278 / SZ) (Geobacter lovleyi).